Consider the following 262-residue polypeptide: MEHLERCAWVLRGTLVRAAVRRYLPWALAASMLAGSLLKELSPLPESYLSNKRNVLNVYFVKVAWAWTFCLLLPFIALTNYHLTGKAGLVLRRLSTLLVGTAIWYVCTAIFSNVEHYTGSCYQSPALEGVRNEPLSKQQCHGQGGFWHGFDISGHSFLLTFCALMIVEEMAVLHEVKTDRSHCLHVAITALVVALGFLTFIWVWMFLCTAVYFHNLSQKVFGTLFGLLGWYGTYGFWYLKSFSPGLPPQSCSSNLKQDSYKR.

Over 1–23 (MEHLERCAWVLRGTLVRAAVRRY) the chain is Cytoplasmic. Residues 24–44 (LPWALAASMLAGSLLKELSPL) traverse the membrane as a helical segment. Over 45–57 (PESYLSNKRNVLN) the chain is Lumenal. The helical transmembrane segment at 58–78 (VYFVKVAWAWTFCLLLPFIAL) threads the bilayer. The Cytoplasmic portion of the chain corresponds to 79-93 (TNYHLTGKAGLVLRR). A helical membrane pass occupies residues 94–114 (LSTLLVGTAIWYVCTAIFSNV). The Lumenal portion of the chain corresponds to 115 to 145 (EHYTGSCYQSPALEGVRNEPLSKQQCHGQGG). The helical transmembrane segment at 146–166 (FWHGFDISGHSFLLTFCALMI) threads the bilayer. His155 is an active-site residue. Residues 167–185 (VEEMAVLHEVKTDRSHCLH) are Cytoplasmic-facing. A helical membrane pass occupies residues 186 to 206 (VAITALVVALGFLTFIWVWMF). At 207–218 (LCTAVYFHNLSQ) the chain is on the lumenal side. Residue His214 is part of the active site. A helical membrane pass occupies residues 219-239 (KVFGTLFGLLGWYGTYGFWYL). Over 240–262 (KSFSPGLPPQSCSSNLKQDSYKR) the chain is Cytoplasmic.

Belongs to the FIT family. FIT2 subfamily.

The protein localises to the endoplasmic reticulum membrane. It carries out the reaction an acyl-CoA + H2O = an acyl-4'-phosphopantetheine + adenosine 3',5'-bisphosphate + 2 H(+). The catalysed reaction is (9Z)-octadecenoyl-CoA + H2O = S-(9Z-octadecenoyl)-4'-phosphopantetheine + adenosine 3',5'-bisphosphate + 2 H(+). It catalyses the reaction (5Z,8Z,11Z,14Z)-eicosatetraenoyl-CoA + H2O = S-(5Z,8Z,11Z,14Z-eicosatetraenoyl)-4'-phosphopantetheine + adenosine 3',5'-bisphosphate + 2 H(+). The enzyme catalyses hexadecanoyl-CoA + H2O = S-hexadecanoyl-4'-phosphopantetheine + adenosine 3',5'-bisphosphate + 2 H(+). Its function is as follows. Fatty acyl-coenzyme A (CoA) diphosphatase that hydrolyzes fatty acyl-CoA to yield acyl-4'-phosphopantetheine and adenosine 3',5'-bisphosphate. Preferentially hydrolyzes unsaturated long-chain acyl-CoA substrates such as oleoyl-CoA/(9Z)-octadecenoyl-CoA and arachidonoyl-CoA/(5Z,8Z,11Z,14Z)-eicosatetraenoyl-CoA in the endoplasmic reticulum (ER) lumen. This catalytic activity is required for maintaining ER structure and for lipid droplets (LDs) biogenesis, which are lipid storage organelles involved in maintaining lipid and energy homeostasis. Directly binds to diacylglycerol (DAGs) and triacylglycerol, which is also important for LD biogenesis. May support directional budding of nacent LDs from the ER into the cytosol by reducing DAG levels at sites of LD formation. Plays a role in the regulation of cell morphology and cytoskeletal organization. The polypeptide is Acyl-coenzyme A diphosphatase FITM2 (Sus scrofa (Pig)).